Here is a 361-residue protein sequence, read N- to C-terminus: Peptide chain release factor 1 (361 aa).

An N5-methylglutamine modification is found at Gln-236.

This sequence belongs to the prokaryotic/mitochondrial release factor family. Methylated by PrmC. Methylation increases the termination efficiency of RF1.

The protein localises to the cytoplasm. In terms of biological role, peptide chain release factor 1 directs the termination of translation in response to the peptide chain termination codons UAG and UAA. This is Peptide chain release factor 1 from Levilactobacillus brevis (strain ATCC 367 / BCRC 12310 / CIP 105137 / JCM 1170 / LMG 11437 / NCIMB 947 / NCTC 947) (Lactobacillus brevis).